The primary structure comprises 586 residues: Phosphomethylpyrimidine synthase (586 aa).

The interval 1 to 59 (MKQSVSAEQIELKSSLPGSKKVYVDGPREGMKVPMREIEQSDTNGVPNPPIRVYDTSGP) is disordered. Residues 22–39 (VYVDGPREGMKVPMREIE) show a composition bias toward basic and acidic residues. Residues N193, M222, Y251, H287, 307 to 309 (SRG), 348 to 351 (DGLR), and E387 each bind substrate. Zn(2+) is bound at residue H391. Y414 serves as a coordination point for substrate. H455 contributes to the Zn(2+) binding site. Positions 535, 538, and 543 each coordinate [4Fe-4S] cluster.

It belongs to the ThiC family. The cofactor is [4Fe-4S] cluster.

The catalysed reaction is 5-amino-1-(5-phospho-beta-D-ribosyl)imidazole + S-adenosyl-L-methionine = 4-amino-2-methyl-5-(phosphooxymethyl)pyrimidine + CO + 5'-deoxyadenosine + formate + L-methionine + 3 H(+). It participates in cofactor biosynthesis; thiamine diphosphate biosynthesis. In terms of biological role, catalyzes the synthesis of the hydroxymethylpyrimidine phosphate (HMP-P) moiety of thiamine from aminoimidazole ribotide (AIR) in a radical S-adenosyl-L-methionine (SAM)-dependent reaction. In Bacillus cereus (strain Q1), this protein is Phosphomethylpyrimidine synthase.